The sequence spans 240 residues: uncharacterized protein (240 aa).

The interval Met1 to Ile27 is disordered. Residues Ser59 and Ser95 each carry the phosphoserine modification. Residues Arg189–Lys227 are disordered. The segment covering Ala202–Gly218 has biased composition (polar residues).

This is an uncharacterized protein from Saccharomyces cerevisiae (strain ATCC 204508 / S288c) (Baker's yeast).